A 165-amino-acid polypeptide reads, in one-letter code: Regulator of sigma D (165 aa).

Belongs to the Rsd/AlgQ family. In terms of assembly, interacts with RpoD.

It is found in the cytoplasm. Functionally, binds RpoD and negatively regulates RpoD-mediated transcription activation by preventing the interaction between the primary sigma factor RpoD with the catalytic core of the RNA polymerase and with promoter DNA. May be involved in replacement of the RNA polymerase sigma subunit from RpoD to RpoS during the transition from exponential growth to the stationary phase. In Enterobacter sp. (strain 638), this protein is Regulator of sigma D.